Reading from the N-terminus, the 414-residue chain is Seminal vesicle secretory protein 2 (414 aa).

A signal peptide spans 1–22 (MKSSVFILSLFLLLERQAAVVG). Position 23 is a pyrrolidone carboxylic acid (Gln-23). 13 tandem repeats follow at residues 108 to 120 (ESQI…VKSS), 127 to 139 (GSQL…VKSS), 140 to 152 (ESQL…VKAS), 153 to 165 (GSQL…VKAS), 166 to 178 (GSQL…MKSS), 179 to 191 (GSQV…MKSS), 192 to 204 (GSQV…MKAS), 205 to 217 (ESQI…RKSQ), 224 to 236 (YGQM…TKSL), 237 to 249 (ESQA…VKSQ), 257 to 269 (YGQR…ETQL), 275 to 287 (DAQL…QKSQ), and 299 to 311 (SAQL…QKSL). Residues 108-311 (ESQIKSFRQV…LKSFGQQKSL (204 aa)) form a 13 X 13 AA tandem repeats region. Disordered stretches follow at residues 170 to 228 (KSYG…GQMK), 240 to 294 (AKSF…SFSQ), and 306 to 369 (GQQK…FGQE). Residues 240–259 (AKSFGQVKSQSGQMKSSYGQ) show a composition bias toward polar residues. Over residues 277–294 (QLKSYGQQKSQKQSSFSQ) the composition is skewed to low complexity. Composition is skewed to polar residues over residues 306–321 (GQQK…TQQK) and 342–351 (SVQQKSTQQM). The segment covering 358-369 (SQFGQQRQFGQE) has biased composition (low complexity).

Post-translationally, the repeating unit appears to be involved in the formation of the copulatory plug via a transglutaminase reaction cross-linking glutamine and lysine residues.

The rat seminal vesicle contains six major androgen-dependent secretory proteins referred to as SVS I-VI. The SVS I-III proteins appear to be components of the rat copulatory plug, with the SVS II protein being the major component. The sequence is that of Seminal vesicle secretory protein 2 (Svs2) from Rattus norvegicus (Rat).